Reading from the N-terminus, the 261-residue chain is Putative methyltransferase MJ0046 (261 aa).

The protein belongs to the methyltransferase superfamily.

The protein is Putative methyltransferase MJ0046 of Methanocaldococcus jannaschii (strain ATCC 43067 / DSM 2661 / JAL-1 / JCM 10045 / NBRC 100440) (Methanococcus jannaschii).